Consider the following 316-residue polypeptide: Methionyl-tRNA formyltransferase (316 aa).

111 to 114 (SLLP) is a (6S)-5,6,7,8-tetrahydrofolate binding site.

It belongs to the Fmt family.

It carries out the reaction L-methionyl-tRNA(fMet) + (6R)-10-formyltetrahydrofolate = N-formyl-L-methionyl-tRNA(fMet) + (6S)-5,6,7,8-tetrahydrofolate + H(+). Its function is as follows. Attaches a formyl group to the free amino group of methionyl-tRNA(fMet). The formyl group appears to play a dual role in the initiator identity of N-formylmethionyl-tRNA by promoting its recognition by IF2 and preventing the misappropriation of this tRNA by the elongation apparatus. In Limosilactobacillus fermentum (strain NBRC 3956 / LMG 18251) (Lactobacillus fermentum), this protein is Methionyl-tRNA formyltransferase.